The following is a 1235-amino-acid chain: ATP-dependent helicase/nuclease subunit A (1235 aa).

In terms of domain architecture, UvrD-like helicase ATP-binding spans 10–482 (SIWTDDQWSA…IDLNQNFRSR (473 aa)). 31 to 38 (AAAGSGKT) lines the ATP pocket. The region spanning 509–799 (QAALKLGASY…RLMTIHSSKG (291 aa)) is the UvrD-like helicase C-terminal domain.

It belongs to the helicase family. AddA subfamily. In terms of assembly, heterodimer of AddA and AddB/RexB. Requires Mg(2+) as cofactor.

It carries out the reaction Couples ATP hydrolysis with the unwinding of duplex DNA by translocating in the 3'-5' direction.. The enzyme catalyses ATP + H2O = ADP + phosphate + H(+). Functionally, the heterodimer acts as both an ATP-dependent DNA helicase and an ATP-dependent, dual-direction single-stranded exonuclease. Recognizes the chi site generating a DNA molecule suitable for the initiation of homologous recombination. The AddA nuclease domain is required for chi fragment generation; this subunit has the helicase and 3' -&gt; 5' nuclease activities. The chain is ATP-dependent helicase/nuclease subunit A from Bacillus velezensis (strain DSM 23117 / BGSC 10A6 / LMG 26770 / FZB42) (Bacillus amyloliquefaciens subsp. plantarum).